The primary structure comprises 229 residues: ATP synthase subunit a (229 aa).

6 consecutive transmembrane segments (helical) span residues 25-45 (ADAI…SILA), 82-102 (FFPL…IGLI), 111-131 (NINT…IVGI), 142-162 (FLGP…IGHF), 181-201 (LVLM…MMLM), and 202-222 (GVLV…IYIQ).

Belongs to the ATPase A chain family. In terms of assembly, F-type ATPases have 2 components, CF(1) - the catalytic core - and CF(0) - the membrane proton channel. CF(1) has five subunits: alpha(3), beta(3), gamma(1), delta(1), epsilon(1). CF(0) has three main subunits: a(1), b(2) and c(9-12). The alpha and beta chains form an alternating ring which encloses part of the gamma chain. CF(1) is attached to CF(0) by a central stalk formed by the gamma and epsilon chains, while a peripheral stalk is formed by the delta and b chains.

It is found in the cell inner membrane. Key component of the proton channel; it plays a direct role in the translocation of protons across the membrane. In Geotalea daltonii (strain DSM 22248 / JCM 15807 / FRC-32) (Geobacter daltonii), this protein is ATP synthase subunit a.